Reading from the N-terminus, the 325-residue chain is Anthranilate phosphoribosyltransferase (325 aa).

5-phospho-alpha-D-ribose 1-diphosphate contacts are provided by residues Gly73, 76 to 77, Thr81, 83 to 86, 100 to 108, and Ser112; these read GD, NIST, and KHGNVSITS. Gly73 is an anthranilate binding site. Ser85 is a Mg(2+) binding site. Asn103 is an anthranilate binding site. Arg158 provides a ligand contact to anthranilate. Residues Asp216 and Glu217 each coordinate Mg(2+).

The protein belongs to the anthranilate phosphoribosyltransferase family. Homodimer. The cofactor is Mg(2+).

The catalysed reaction is N-(5-phospho-beta-D-ribosyl)anthranilate + diphosphate = 5-phospho-alpha-D-ribose 1-diphosphate + anthranilate. Its pathway is amino-acid biosynthesis; L-tryptophan biosynthesis; L-tryptophan from chorismate: step 2/5. Functionally, catalyzes the transfer of the phosphoribosyl group of 5-phosphorylribose-1-pyrophosphate (PRPP) to anthranilate to yield N-(5'-phosphoribosyl)-anthranilate (PRA). In Methanococcus aeolicus (strain ATCC BAA-1280 / DSM 17508 / OCM 812 / Nankai-3), this protein is Anthranilate phosphoribosyltransferase.